The chain runs to 441 residues: Polycomb protein EED (441 aa).

Residues Met-1–Lys-72 form a disordered region. An N-acetylserine modification is found at Ser-2. A phosphoserine mark is found at Ser-2 and Ser-34. The span at Glu-45–Asn-61 shows a compositional bias: polar residues. Residue Thr-55 is modified to Phosphothreonine. Lys-66 carries the N6,N6,N6-trimethyllysine; alternate modification. An N6,N6-dimethyllysine; alternate modification is found at Lys-66. An N6-methyllysine; alternate modification is found at Lys-66. The segment at Ser-81–Arg-441 is interaction with EZH2. WD repeat units lie at residues Asp-91–Leu-134, Asp-142–His-185, Gly-188–Ile-228, and Gly-234–Lys-275. 2 required for interaction with the matrix protein MA of HIV-1 regions span residues Thr-149–Asp-303 and Thr-301–Arg-441. N6,N6,N6-trimethyllysine; alternate is present on residues Lys-197, Lys-268, and Lys-284. 3 positions are modified to N6,N6-dimethyllysine; alternate: Lys-197, Lys-268, and Lys-284. 3 positions are modified to N6-methyllysine; alternate: Lys-197, Lys-268, and Lys-284. WD repeat units follow at residues Ile-304 to Asp-341, Ser-359 to Ala-399, and Lys-408 to Arg-441.

It belongs to the WD repeat ESC family. In terms of assembly, component of the PRC2/EED-EZH2 complex, which includes EED, EZH2, SUZ12, RBBP4 and RBBP7 and possibly AEBP2. The minimum components required for methyltransferase activity of the PRC2/EED-EZH2 complex are EED, EZH2 and SUZ12. Component of the PRC2/EED-EZH1 complex, which includes EED, EZH1, SUZ12, RBBP4 and AEBP2. The PRC2 complex may also interact with DNMT1, DNMT3A, DNMT3B and PHF1 via the EZH2 subunit and with SIRT1 via the SUZ12 subunit. Interacts with HDAC, HDAC2, histone H1 and YY1. May interact with ITGA4, ITGAE and ITGB7. Interacts with CDYL. Interacts with BMAL1. Interacts with KMT2A/MLL1. (Microbial infection) May interact with the MA protein of HIV-1. In terms of processing, methylated. Binding to histone H1 'Lys-26' promotes mono-, di-, and trimethylation of internal lysines. As to expression, expressed in brain, colon, heart, kidney, liver, lung, muscle, ovary, peripheral blood leukocytes, pancreas, placenta, prostate, spleen, small intestine, testis, thymus and uterus. Appears to be overexpressed in breast and colon cancer.

The protein localises to the nucleus. It localises to the chromosome. Its function is as follows. Polycomb group (PcG) protein. Component of the PRC2/EED-EZH2 complex, which methylates 'Lys-9' and 'Lys-27' of histone H3, leading to transcriptional repression of the affected target gene. Also recognizes 'Lys-26' trimethylated histone H1 with the effect of inhibiting PRC2 complex methyltransferase activity on nucleosomal histone H3 'Lys-27', whereas H3 'Lys-27' recognition has the opposite effect, enabling the propagation of this repressive mark. The PRC2/EED-EZH2 complex may also serve as a recruiting platform for DNA methyltransferases, thereby linking two epigenetic repression systems. Genes repressed by the PRC2/EED-EZH2 complex include HOXC8, HOXA9, MYT1 and CDKN2A. This chain is Polycomb protein EED, found in Homo sapiens (Human).